Here is a 382-residue protein sequence, read N- to C-terminus: MTSAPRPRPTLDDLPLREDLRGKSPYGASQLAVPVRLSTNENPHPPTQALVDDVVRSVGEAAVDLHRYPDRDAVALRTDLANYLTAQTGTRIGFENVWAANGSNEILQQLLQAFGGPGRTAIGFVPSYSMHPIISDGTHTEWVETARADGFGLDIDAAIAVVSDRRPDVVFITSPNNPTGQSVSLTELRRLLDVVPGILIVDEAYGEFSSQPSAVGLIEEYPTRVVVTRTMSKAFAFAGGRLGYLVATPALIDALLLVRLPYHLSSVTQVAARAALRHAQDTLGSVATLIAERERVSKKLASMGFRVIPSDANFVLFGEFADAPAAWQRYLDQGVLIRDVGIPGYLRATTGLADENDAFLRASARIAATDLAPAAASPVGAP.

The tract at residues 1-24 (MTSAPRPRPTLDDLPLREDLRGKS) is disordered. The span at 9–22 (PTLDDLPLREDLRG) shows a compositional bias: basic and acidic residues. Residue Lys233 is modified to N6-(pyridoxal phosphate)lysine.

It belongs to the class-II pyridoxal-phosphate-dependent aminotransferase family. Histidinol-phosphate aminotransferase subfamily. In terms of assembly, homodimer. The cofactor is pyridoxal 5'-phosphate.

It carries out the reaction L-histidinol phosphate + 2-oxoglutarate = 3-(imidazol-4-yl)-2-oxopropyl phosphate + L-glutamate. It participates in amino-acid biosynthesis; L-histidine biosynthesis; L-histidine from 5-phospho-alpha-D-ribose 1-diphosphate: step 7/9. This is Histidinol-phosphate aminotransferase from Mycobacterium ulcerans (strain Agy99).